The following is a 322-amino-acid chain: tRNA U34 carboxymethyltransferase (322 aa).

Carboxy-S-adenosyl-L-methionine-binding positions include Lys-91, Trp-105, Lys-110, Gly-129, 179 to 180, Met-195, Tyr-199, and Arg-314; that span reads LE.

This sequence belongs to the class I-like SAM-binding methyltransferase superfamily. CmoB family. In terms of assembly, homotetramer.

It catalyses the reaction carboxy-S-adenosyl-L-methionine + 5-hydroxyuridine(34) in tRNA = 5-carboxymethoxyuridine(34) in tRNA + S-adenosyl-L-homocysteine + H(+). Its function is as follows. Catalyzes carboxymethyl transfer from carboxy-S-adenosyl-L-methionine (Cx-SAM) to 5-hydroxyuridine (ho5U) to form 5-carboxymethoxyuridine (cmo5U) at position 34 in tRNAs. The chain is tRNA U34 carboxymethyltransferase from Pseudomonas paraeruginosa (strain DSM 24068 / PA7) (Pseudomonas aeruginosa (strain PA7)).